Here is a 460-residue protein sequence, read N- to C-terminus: Chromosomal replication initiator protein DnaA 1 (460 aa).

A domain I, interacts with DnaA modulators region spans residues 1-68; it reads MRAWEEFLLL…KSGLVNNNNK (68 aa). Residues 68–102 are domain II; that stretch reads KPIRVHVTSVDKAAPFYKEKQMQQEKTAYFTMHYG. Residues 103 to 321 form a domain III, AAA+ region region; that stretch reads SVNPEMTFSN…HALNLLAKRV (219 aa). 4 residues coordinate ATP: Gly-151, Gly-153, Lys-154, and Thr-155. Positions 322 to 460 are domain IV, binds dsDNA; that stretch reads MYKKLSHQLL…EFFPSEEMII (139 aa).

The protein belongs to the DnaA family. Oligomerizes as a right-handed, spiral filament on DNA at oriC.

The protein resides in the cytoplasm. Functionally, plays an essential role in the initiation and regulation of chromosomal replication. ATP-DnaA binds to the origin of replication (oriC) to initiate formation of the DNA replication initiation complex once per cell cycle. Binds the DnaA box (a 9 base pair repeat at the origin) and separates the double-stranded (ds)DNA. Forms a right-handed helical filament on oriC DNA; dsDNA binds to the exterior of the filament while single-stranded (ss)DNA is stabiized in the filament's interior. The ATP-DnaA-oriC complex binds and stabilizes one strand of the AT-rich DNA unwinding element (DUE), permitting loading of DNA polymerase. After initiation quickly degrades to an ADP-DnaA complex that is not apt for DNA replication. Binds acidic phospholipids. This chain is Chromosomal replication initiator protein DnaA 1, found in Chlamydia pneumoniae (Chlamydophila pneumoniae).